Here is a 341-residue protein sequence, read N- to C-terminus: S-adenosylmethionine:tRNA ribosyltransferase-isomerase (341 aa).

The protein belongs to the QueA family. In terms of assembly, monomer.

The protein resides in the cytoplasm. The enzyme catalyses 7-aminomethyl-7-carbaguanosine(34) in tRNA + S-adenosyl-L-methionine = epoxyqueuosine(34) in tRNA + adenine + L-methionine + 2 H(+). The protein operates within tRNA modification; tRNA-queuosine biosynthesis. In terms of biological role, transfers and isomerizes the ribose moiety from AdoMet to the 7-aminomethyl group of 7-deazaguanine (preQ1-tRNA) to give epoxyqueuosine (oQ-tRNA). This is S-adenosylmethionine:tRNA ribosyltransferase-isomerase from Alkaliphilus metalliredigens (strain QYMF).